The sequence spans 251 residues: Uroporphyrinogen-III synthase (251 aa).

A disordered region spans residues 231-251; the sequence is PAPNPESLASSIVAFDEENSS.

It belongs to the uroporphyrinogen-III synthase family.

The enzyme catalyses hydroxymethylbilane = uroporphyrinogen III + H2O. It functions in the pathway porphyrin-containing compound metabolism; protoporphyrin-IX biosynthesis; coproporphyrinogen-III from 5-aminolevulinate: step 3/4. Catalyzes cyclization of the linear tetrapyrrole, hydroxymethylbilane, to the macrocyclic uroporphyrinogen III. This Schizosaccharomyces pombe (strain 972 / ATCC 24843) (Fission yeast) protein is Uroporphyrinogen-III synthase (ups1).